We begin with the raw amino-acid sequence, 376 residues long: MSDNSQNLLYDKFELPKSVKMMTVEGSGGSIDKHARFVAEPLERGMGHTLGNALRRALLIGLEAPAIISFSMTGVLHEYMAIEGIIEDVTNIVLNLKGALLKKYPFQDSEDGRRPQLLKSMISIDASDLAACGGQRAVTLADLLQEGGFEAVNPEHVIFTVTQPMQVEVALRVAFGRGYSTSERIILEDKGVNEIVLDAAFSPVVLVNYFVEDTRVGQDTDFDRLILYVETDGRVSPKEALAFSTQILTKHFSIFEKMDEKKIVFEEAISIEKENKDDILHKLVLGINEIELSVRSTNCLSNANIETIGELVIMPEPRLLQFRNFGKKSLCEIKNKLKEMKLELGMDLSQFGVGLDNVKEKMKWYAEKIRSKNVKG.

The alpha N-terminal domain (alpha-NTD) stretch occupies residues 1 to 259 (MSDNSQNLLY…KHFSIFEKMD (259 aa)). The tract at residues 276 to 376 (KDDILHKLVL…EKIRSKNVKG (101 aa)) is alpha C-terminal domain (alpha-CTD).

This sequence belongs to the RNA polymerase alpha chain family. As to quaternary structure, homodimer. The RNAP catalytic core consists of 2 alpha, 1 beta, 1 beta' and 1 omega subunit. When a sigma factor is associated with the core the holoenzyme is formed, which can initiate transcription.

The enzyme catalyses RNA(n) + a ribonucleoside 5'-triphosphate = RNA(n+1) + diphosphate. Functionally, DNA-dependent RNA polymerase catalyzes the transcription of DNA into RNA using the four ribonucleoside triphosphates as substrates. This chain is DNA-directed RNA polymerase subunit alpha, found in Chlamydia felis (strain Fe/C-56) (Chlamydophila felis).